Reading from the N-terminus, the 269-residue chain is 3-deoxy-manno-octulosonate cytidylyltransferase (269 aa).

This sequence belongs to the KdsB family.

It is found in the cytoplasm. It carries out the reaction 3-deoxy-alpha-D-manno-oct-2-ulosonate + CTP = CMP-3-deoxy-beta-D-manno-octulosonate + diphosphate. The protein operates within nucleotide-sugar biosynthesis; CMP-3-deoxy-D-manno-octulosonate biosynthesis; CMP-3-deoxy-D-manno-octulosonate from 3-deoxy-D-manno-octulosonate and CTP: step 1/1. It participates in bacterial outer membrane biogenesis; lipopolysaccharide biosynthesis. Activates KDO (a required 8-carbon sugar) for incorporation into bacterial lipopolysaccharide in Gram-negative bacteria. This is 3-deoxy-manno-octulosonate cytidylyltransferase from Cupriavidus necator (strain ATCC 17699 / DSM 428 / KCTC 22496 / NCIMB 10442 / H16 / Stanier 337) (Ralstonia eutropha).